The sequence spans 733 residues: Polyribonucleotide nucleotidyltransferase (733 aa).

Positions 404-424 (NYNMPPYSTGETGRVGSPKRR) are disordered. Mg(2+) contacts are provided by Asp-516 and Asp-522. The region spanning 582-641 (PRIITVHIPVDKIGEVIGPKGKMINQIQDDTGANISIEDDGTIFIGADNGDSAESARSMI) is the KH domain. The 73-residue stretch at 653 to 725 (GERYLGTVVK…DRGKLSLVLA (73 aa)) folds into the S1 motif domain.

This sequence belongs to the polyribonucleotide nucleotidyltransferase family. Requires Mg(2+) as cofactor.

It localises to the cytoplasm. The enzyme catalyses RNA(n+1) + phosphate = RNA(n) + a ribonucleoside 5'-diphosphate. Involved in mRNA degradation. Catalyzes the phosphorolysis of single-stranded polyribonucleotides processively in the 3'- to 5'-direction. This chain is Polyribonucleotide nucleotidyltransferase, found in Cutibacterium acnes (strain DSM 16379 / KPA171202) (Propionibacterium acnes).